A 390-amino-acid chain; its full sequence is Magnesium-protoporphyrin IX monomethyl ester [oxidative] cyclase (390 aa).

It belongs to the AcsF family. Fe cation serves as cofactor.

It catalyses the reaction Mg-protoporphyrin IX 13-monomethyl ester + 3 NADPH + 3 O2 + 2 H(+) = 3,8-divinyl protochlorophyllide a + 3 NADP(+) + 5 H2O. It functions in the pathway porphyrin-containing compound metabolism; chlorophyll biosynthesis (light-independent). Its function is as follows. Catalyzes the formation of the isocyclic ring in chlorophyll biosynthesis. Mediates the cyclase reaction, which results in the formation of divinylprotochlorophyllide (Pchlide) characteristic of all chlorophylls from magnesium-protoporphyrin IX 13-monomethyl ester (MgPMME). The sequence is that of Magnesium-protoporphyrin IX monomethyl ester [oxidative] cyclase from Prochlorococcus marinus (strain MIT 9312).